A 202-amino-acid chain; its full sequence is Probable cobalt-precorrin-6B C(15)-methyltransferase (decarboxylating) (202 aa).

S-adenosyl-L-methionine-binding positions include threonine 29, 53–57 (GCGSG), aspartate 77, and valine 106.

The protein belongs to the methyltransferase superfamily. Archaeal-type CbiT family.

It carries out the reaction Co-precorrin-6B + S-adenosyl-L-methionine = Co-precorrin-7 + S-adenosyl-L-homocysteine + CO2. Its pathway is cofactor biosynthesis; adenosylcobalamin biosynthesis; cob(II)yrinate a,c-diamide from sirohydrochlorin (anaerobic route): step 8/10. In terms of biological role, catalyzes the methylation of C-15 in cobalt-precorrin-6B followed by the decarboxylation of C-12 to form cobalt-precorrin-7. In Thermoplasma acidophilum (strain ATCC 25905 / DSM 1728 / JCM 9062 / NBRC 15155 / AMRC-C165), this protein is Probable cobalt-precorrin-6B C(15)-methyltransferase (decarboxylating).